A 535-amino-acid polypeptide reads, in one-letter code: MSLLLEEIIRSVEALLKLRNRNQEPYVDPNLNPVLLVPGIAGSILNAVDHENGNEERVWVRIFGADHEFRTKMWSRFDPSTGKTISLDPKTSIVVPQDRAGLHAIDVLDPDMIVGRESVYYFHEMIVEMIGWGFEEGKTLFGFGYDFRQSNRLQETLDQFAKKLETVYKASGEKKINVISHSMGGLLVKCFMGLHSDIFEKYVQNWIAIAAPFRGAPGYITSTLLNGMSFVNGWEQNFFVSKWSMHQLLIECPSIYELMCCPYFKWELPPVLELWREKESNDGVGTSYVVLESYCSLESLEVFTKSLSNNTADYCGESIDLPFNWKIMEWAHKTKQVLASAKLPPKVKFYNIYGTNLETPHSVCYGNEKMPVKDLTNLRYFQPTYICVDGDGTVPMESAMADGLEAVARVGVPGEHRGILNDHRVFRMLKKWLNVGEPDPFYNPVNDYVILPTTYEFEKFHENGLEVASVKESWDIISDDNNIGTTGSTVNSISVSQPGDDQNPQAEARATLTVQPQSDGRQHVELNAVSVSVDA.

Ser2 bears the N-acetylserine mark. Residue Ser182 is the Acyl-ester intermediate of the active site. Active-site charge relay system residues include Asp391 and His416. Residues 488-505 are compositionally biased toward polar residues; that stretch reads STVNSISVSQPGDDQNPQ. The segment at 488 to 507 is disordered; sequence STVNSISVSQPGDDQNPQAE.

The protein belongs to the AB hydrolase superfamily. Lipase family.

The polypeptide is Lecithin-cholesterol acyltransferase-like 4 (LCAT4) (Arabidopsis thaliana (Mouse-ear cress)).